The primary structure comprises 448 residues: Phosphoglucosamine mutase (448 aa).

The active-site Phosphoserine intermediate is serine 104. Positions 104, 241, 243, and 245 each coordinate Mg(2+). Residue serine 104 is modified to Phosphoserine.

Belongs to the phosphohexose mutase family. Mg(2+) serves as cofactor. In terms of processing, activated by phosphorylation.

It carries out the reaction alpha-D-glucosamine 1-phosphate = D-glucosamine 6-phosphate. Catalyzes the conversion of glucosamine-6-phosphate to glucosamine-1-phosphate. In Nocardioides sp. (strain ATCC BAA-499 / JS614), this protein is Phosphoglucosamine mutase.